A 651-amino-acid chain; its full sequence is Peptide-N(4)-(N-acetyl-beta-glucosaminyl)asparagine amidase (651 aa).

Ala2 bears the N-acetylalanine mark. In terms of domain architecture, PUB spans 30-91 (EASKLLLTYA…EGETHLIFPK (62 aa)). Zn(2+) contacts are provided by Cys247, Cys250, Cys280, and Cys283. The active-site Nucleophile is Cys306. Active-site residues include His333 and Asp350. The region spanning 451–651 (ELGGRVSGSL…LEIIITFNDL (201 aa)) is the PAW domain.

The protein belongs to the transglutaminase-like superfamily. PNGase family. In terms of assembly, component of a complex required to couple retrotranslocation, ubiquitination and deglycosylation composed of NGLY1, SAKS1, AMFR, VCP and RAD23B. Interacts with the proteasome components RAD23B and PSMC1. Interacts with directly with VCP. Interacts with DERL1, bringing it close to the endoplasmic reticulum membrane. Interacts with SAKS1. Requires Zn(2+) as cofactor. Ubiquitously expressed with highest level in testis.

The protein resides in the cytoplasm. It catalyses the reaction Hydrolysis of an N(4)-(acetyl-beta-D-glucosaminyl)asparagine residue in which the glucosamine residue may be further glycosylated, to yield a (substituted) N-acetyl-beta-D-glucosaminylamine and a peptide containing an aspartate residue.. With respect to regulation, inhibited by Z-VAD-fmk, a well-known caspase inhibitor, which inhibits enzyme activity through covalent binding of the carbohydrate to the single Cys-306 residue. Its function is as follows. Specifically deglycosylates the denatured form of N-linked glycoproteins in the cytoplasm and assists their proteasome-mediated degradation. Cleaves the beta-aspartyl-glucosamine (GlcNAc) of the glycan and the amide side chain of Asn, converting Asn to Asp. Prefers proteins containing high-mannose over those bearing complex type oligosaccharides. Can recognize misfolded proteins in the endoplasmic reticulum that are exported to the cytosol to be destroyed and deglycosylate them, while it has no activity toward native proteins. Deglycosylation is a prerequisite for subsequent proteasome-mediated degradation of some, but not all, misfolded glycoproteins. The chain is Peptide-N(4)-(N-acetyl-beta-glucosaminyl)asparagine amidase (Ngly1) from Mus musculus (Mouse).